The chain runs to 89 residues: MANSAQARKRARQADGQRSHNASLRSTLRTAIKRVRQAIEAGDKAAAQGVFQQSVAVLDRIADKKIVHKNKASRTKSRLSAQIKALAAA.

A disordered region spans residues M1 to S26.

Belongs to the bacterial ribosomal protein bS20 family.

Its function is as follows. Binds directly to 16S ribosomal RNA. In Dechloromonas aromatica (strain RCB), this protein is Small ribosomal subunit protein bS20.